The sequence spans 342 residues: tRNA-specific 2-thiouridylase MnmA (342 aa).

Residues 6–13 (GMSGGVDS) and Leu32 contribute to the ATP site. Catalysis depends on Cys99, which acts as the Nucleophile. Cysteines 99 and 190 form a disulfide. Gly124 is an ATP binding site. The tract at residues 140–142 (KDQ) is interaction with tRNA. Cys190 functions as the Cysteine persulfide intermediate in the catalytic mechanism. The interaction with tRNA stretch occupies residues 292-293 (RY).

Belongs to the MnmA/TRMU family.

The protein resides in the cytoplasm. The enzyme catalyses S-sulfanyl-L-cysteinyl-[protein] + uridine(34) in tRNA + AH2 + ATP = 2-thiouridine(34) in tRNA + L-cysteinyl-[protein] + A + AMP + diphosphate + H(+). Functionally, catalyzes the 2-thiolation of uridine at the wobble position (U34) of tRNA, leading to the formation of s(2)U34. This chain is tRNA-specific 2-thiouridylase MnmA, found in Hydrogenobaculum sp. (strain Y04AAS1).